A 369-amino-acid polypeptide reads, in one-letter code: Pulmonary surfactant-associated protein D (369 aa).

The N-terminal stretch at 1-20 (MLLLPLSVLLLLTQPWRSLG) is a signal peptide. Residues Cys35 and Cys40 each carry the S-nitrosocysteine modification. Residues 41–215 (SPPEDGLPGR…ERGAKGESGL (175 aa)) form a disordered region. The region spanning 46–216 (GLPGRDGRDG…RGAKGESGLA (171 aa)) is the Collagen-like domain. A compositionally biased stretch (basic and acidic residues) spans 47–65 (LPGRDGRDGREGPRGEKGD). A 4-hydroxyproline modification is found at Pro78. Lys87 is subject to 5-hydroxylysine. N-linked (GlcNAc...) asparagine glycosylation occurs at Asn90. At Pro96 the chain carries 4-hydroxyproline. Lys99 carries the 5-hydroxylysine modification. The span at 139–148 (GPKGGVGAPG) shows a compositional bias: gly residues. A 4-hydroxyproline mark is found at Pro165 and Pro171. The span at 165-191 (PGEPGAPGRAGAPGPAGAIGPQGPSGA) shows a compositional bias: low complexity. Residues 198-210 (KGDRGTPGERGAK) show a composition bias toward basic and acidic residues. The stretch at 217–248 (EVNALRQRVGILEGQLQRLQNAFSQYKKAMLF) forms a coiled coil. Residues 254–369 (VGEKIFKTEG…GEQRLVICEF (116 aa)) enclose the C-type lectin domain. Disulfide bonds link Cys275–Cys367 and Cys345–Cys359.

This sequence belongs to the SFTPD family. As to quaternary structure, oligomeric complex of 4 set of homotrimers. In terms of processing, hydroxylation on proline residues within the sequence motif, GXPG, is most likely to be 4-hydroxy as this fits the requirement for 4-hydroxylation in vertebrates. Post-translationally, S-nitrosylation at Cys-35 and Cys-40 alters the quaternary structure which results in a pro-inflammatory chemoattractive signaling activity with macrophages.

The protein localises to the secreted. It localises to the extracellular space. Its subcellular location is the extracellular matrix. It is found in the surface film. Its function is as follows. Contributes to the lung's defense against inhaled microorganisms, organic antigens and toxins. Interacts with compounds such as bacterial lipopolysaccharides, oligosaccharides and fatty acids and modulates leukocyte action in immune response. May participate in the extracellular reorganization or turnover of pulmonary surfactant. Binds strongly maltose residues and to a lesser extent other alpha-glucosyl moieties. The chain is Pulmonary surfactant-associated protein D (SFTPD) from Bos taurus (Bovine).